Consider the following 322-residue polypeptide: ATP-dependent 6-phosphofructokinase (322 aa).

ATP is bound by residues Gly12, 73-74 (RF), and 103-106 (GDGT). Asp104 contacts Mg(2+). Residue 126-128 (TID) coordinates substrate. Residue Asp128 is the Proton acceptor of the active site. Arg155 lines the ADP pocket. Substrate-binding positions include Arg163 and 170–172 (MGR). Residues 186-188 (GSE), Lys212, and 214-216 (KPS) each bind ADP. Residues Glu223, Arg245, and 251–254 (HTQR) each bind substrate.

The protein belongs to the phosphofructokinase type A (PFKA) family. ATP-dependent PFK group I subfamily. Prokaryotic clade 'B1' sub-subfamily. As to quaternary structure, homotetramer. Requires Mg(2+) as cofactor.

The protein localises to the cytoplasm. The catalysed reaction is beta-D-fructose 6-phosphate + ATP = beta-D-fructose 1,6-bisphosphate + ADP + H(+). It functions in the pathway carbohydrate degradation; glycolysis; D-glyceraldehyde 3-phosphate and glycerone phosphate from D-glucose: step 3/4. Its activity is regulated as follows. Allosterically activated by ADP and other diphosphonucleosides, and allosterically inhibited by phosphoenolpyruvate. Catalyzes the phosphorylation of D-fructose 6-phosphate to fructose 1,6-bisphosphate by ATP, the first committing step of glycolysis. In Mesomycoplasma hyopneumoniae (strain 232) (Mycoplasma hyopneumoniae), this protein is ATP-dependent 6-phosphofructokinase.